Consider the following 173-residue polypeptide: Protein-export protein SecB (173 aa).

It belongs to the SecB family. In terms of assembly, homotetramer, a dimer of dimers. One homotetramer interacts with 1 SecA dimer.

The protein resides in the cytoplasm. One of the proteins required for the normal export of preproteins out of the cell cytoplasm. It is a molecular chaperone that binds to a subset of precursor proteins, maintaining them in a translocation-competent state. It also specifically binds to its receptor SecA. The polypeptide is Protein-export protein SecB (Novosphingobium aromaticivorans (strain ATCC 700278 / DSM 12444 / CCUG 56034 / CIP 105152 / NBRC 16084 / F199)).